A 409-amino-acid polypeptide reads, in one-letter code: Putative integrase/recombinase y4rA (409 aa).

One can recognise a Core-binding (CB) domain in the interval 112 to 197 (SAVEQHVQAY…ALRSFLSYAR (86 aa)). Residues 220–402 (SIPRAIGRDD…DLDALRTLAL (183 aa)) form the Tyr recombinase domain. Active-site residues include Arg260, Lys284, His354, Arg357, and His380. The active-site O-(3'-phospho-DNA)-tyrosine intermediate is Tyr389.

This sequence belongs to the 'phage' integrase family.

This chain is Putative integrase/recombinase y4rA, found in Sinorhizobium fredii (strain NBRC 101917 / NGR234).